We begin with the raw amino-acid sequence, 106 residues long: Small ribosomal subunit protein bS18 (106 aa).

The disordered stretch occupies residues 1–32 (MRWMKIMSEDMKQEQSGEGRGGRGGPARPLAS). Residues 7-21 (MSEDMKQEQSGEGRG) show a composition bias toward basic and acidic residues.

It belongs to the bacterial ribosomal protein bS18 family. As to quaternary structure, part of the 30S ribosomal subunit. Forms a tight heterodimer with protein bS6.

Functionally, binds as a heterodimer with protein bS6 to the central domain of the 16S rRNA, where it helps stabilize the platform of the 30S subunit. The chain is Small ribosomal subunit protein bS18 from Magnetococcus marinus (strain ATCC BAA-1437 / JCM 17883 / MC-1).